A 318-amino-acid chain; its full sequence is Ribosomal RNA small subunit methyltransferase H (318 aa).

Residues 42-44 (GGH), aspartate 62, phenylalanine 86, aspartate 108, and glutamine 115 contribute to the S-adenosyl-L-methionine site.

The protein belongs to the methyltransferase superfamily. RsmH family.

The protein localises to the cytoplasm. It catalyses the reaction cytidine(1402) in 16S rRNA + S-adenosyl-L-methionine = N(4)-methylcytidine(1402) in 16S rRNA + S-adenosyl-L-homocysteine + H(+). Its function is as follows. Specifically methylates the N4 position of cytidine in position 1402 (C1402) of 16S rRNA. This is Ribosomal RNA small subunit methyltransferase H from Yersinia pestis (strain Pestoides F).